Here is a 1515-residue protein sequence, read N- to C-terminus: Apolipophorin (1515 aa).

In terms of domain architecture, VWFD spans leucine 952–proline 1118. Cysteine 976 and cysteine 1117 form a disulfide bridge. Asparagine 988 carries an N-linked (GlcNAc...) asparagine glycan.

In terms of tissue distribution, hemolymph.

The protein resides in the secreted. Its function is as follows. Mediates transport for various types of lipids in hemolymph. Acts by forming lipoprotein particles that bind lipoproteins and lipids. Binds the A.niger cell wall component alpha-1,3-glucan, a fungal pathogen-associated molecular pattern (PAMP) that activates the host immune response. In Galleria mellonella (Greater wax moth), this protein is Apolipophorin.